We begin with the raw amino-acid sequence, 226 residues long: Lipoprotein-releasing system ATP-binding protein LolD (226 aa).

The region spanning 6–226 (VLISGLTKTF…KLYKGNLEEV (221 aa)) is the ABC transporter domain. Residue 42–49 (GESGSGKS) coordinates ATP.

It belongs to the ABC transporter superfamily. Lipoprotein translocase (TC 3.A.1.125) family. The complex is composed of two ATP-binding proteins (LolD) and two transmembrane proteins (LolC and LolE).

The protein resides in the cell inner membrane. Functionally, part of the ABC transporter complex LolCDE involved in the translocation of mature outer membrane-directed lipoproteins, from the inner membrane to the periplasmic chaperone, LolA. Responsible for the formation of the LolA-lipoprotein complex in an ATP-dependent manner. In Treponema denticola (strain ATCC 35405 / DSM 14222 / CIP 103919 / JCM 8153 / KCTC 15104), this protein is Lipoprotein-releasing system ATP-binding protein LolD.